The sequence spans 359 residues: Phospho-N-acetylmuramoyl-pentapeptide-transferase (359 aa).

10 helical membrane-spanning segments follow: residues 24–44, 72–92, 100–120, 134–154, 170–190, 197–217, 234–254, 261–281, 289–309, and 336–356; these read FRAL…SPIF, FVPS…SILL, TWIM…DDFV, MLGQ…VMHI, LGYF…NAVN, GLAI…SYVA, AGEL…FLWF, MFMG…LAIM, IIAG…VSVF, and KIVV…IATL.

The protein belongs to the glycosyltransferase 4 family. MraY subfamily. The cofactor is Mg(2+).

Its subcellular location is the cell inner membrane. The enzyme catalyses UDP-N-acetyl-alpha-D-muramoyl-L-alanyl-gamma-D-glutamyl-meso-2,6-diaminopimeloyl-D-alanyl-D-alanine + di-trans,octa-cis-undecaprenyl phosphate = di-trans,octa-cis-undecaprenyl diphospho-N-acetyl-alpha-D-muramoyl-L-alanyl-D-glutamyl-meso-2,6-diaminopimeloyl-D-alanyl-D-alanine + UMP. It participates in cell wall biogenesis; peptidoglycan biosynthesis. Catalyzes the initial step of the lipid cycle reactions in the biosynthesis of the cell wall peptidoglycan: transfers peptidoglycan precursor phospho-MurNAc-pentapeptide from UDP-MurNAc-pentapeptide onto the lipid carrier undecaprenyl phosphate, yielding undecaprenyl-pyrophosphoryl-MurNAc-pentapeptide, known as lipid I. This chain is Phospho-N-acetylmuramoyl-pentapeptide-transferase, found in Hydrogenobaculum sp. (strain Y04AAS1).